We begin with the raw amino-acid sequence, 338 residues long: Aspartate carbamoyltransferase catalytic subunit (338 aa).

Carbamoyl phosphate-binding residues include Arg-72 and Thr-73. Lys-100 serves as a coordination point for L-aspartate. Residues Arg-122, His-152, and Gln-155 each coordinate carbamoyl phosphate. L-aspartate is bound by residues Arg-186 and Arg-243. 2 residues coordinate carbamoyl phosphate: Gly-284 and Pro-285.

This sequence belongs to the aspartate/ornithine carbamoyltransferase superfamily. ATCase family. As to quaternary structure, heterododecamer (2C3:3R2) of six catalytic PyrB chains organized as two trimers (C3), and six regulatory PyrI chains organized as three dimers (R2).

It catalyses the reaction carbamoyl phosphate + L-aspartate = N-carbamoyl-L-aspartate + phosphate + H(+). It participates in pyrimidine metabolism; UMP biosynthesis via de novo pathway; (S)-dihydroorotate from bicarbonate: step 2/3. Functionally, catalyzes the condensation of carbamoyl phosphate and aspartate to form carbamoyl aspartate and inorganic phosphate, the committed step in the de novo pyrimidine nucleotide biosynthesis pathway. In Acinetobacter baumannii (strain AB307-0294), this protein is Aspartate carbamoyltransferase catalytic subunit.